We begin with the raw amino-acid sequence, 176 residues long: N,N-dimethyl phenylurea N-demethylase subunit beta (176 aa).

This sequence belongs to the bacterial ring-hydroxylating dioxygenase beta subunit family. As to quaternary structure, pdmA (subunit alpha) and PdmB (subunit beta) form the oxygenase component of a bacterial Rieske non-heme iron oxygenase (RO) system.

The enzyme catalyses a 1,1-dimethyl-3-phenylurea + 2 reduced [2Fe-2S]-[ferredoxin] + O2 + 2 H(+) = a 1-methyl-3-phenylurea + formaldehyde + 2 oxidized [2Fe-2S]-[ferredoxin] + H2O. It catalyses the reaction isoproturon + 2 reduced [2Fe-2S]-[ferredoxin] + O2 + 2 H(+) = 1-methyl-3-[4-(propan-2-yl)phenyl]urea + formaldehyde + 2 oxidized [2Fe-2S]-[ferredoxin] + H2O. The catalysed reaction is chlorotoluron + 2 reduced [2Fe-2S]-[ferredoxin] + O2 + 2 H(+) = 3-(3-chloro-4-methylphenyl)-1-methylurea + formaldehyde + 2 oxidized [2Fe-2S]-[ferredoxin] + H2O. It carries out the reaction metoxuron + 2 reduced [2Fe-2S]-[ferredoxin] + O2 + 2 H(+) = 3-(3-chloro-4-methoxylphenyl)-1-methylurea + formaldehyde + 2 oxidized [2Fe-2S]-[ferredoxin] + H2O. The enzyme catalyses monuron + 2 reduced [2Fe-2S]-[ferredoxin] + O2 + 2 H(+) = 3-(4-chlorophenyl)-1-methylurea + formaldehyde + 2 oxidized [2Fe-2S]-[ferredoxin] + H2O. It catalyses the reaction diuron + 2 reduced [2Fe-2S]-[ferredoxin] + O2 + 2 H(+) = 3-(3,4-dichlorophenyl)-1-methylurea + formaldehyde + 2 oxidized [2Fe-2S]-[ferredoxin] + H2O. The catalysed reaction is fluometuron + 2 reduced [2Fe-2S]-[ferredoxin] + O2 + 2 H(+) = 3-[3-(trifluoromethyl)phenyl]-1-methylurea + formaldehyde + 2 oxidized [2Fe-2S]-[ferredoxin] + H2O. It carries out the reaction fenuron + 2 reduced [2Fe-2S]-[ferredoxin] + O2 + 2 H(+) = 1-methyl-3-phenylurea + formaldehyde + 2 oxidized [2Fe-2S]-[ferredoxin] + H2O. It functions in the pathway xenobiotic degradation. With respect to regulation, activity is stimulated in vitro by coexpression of a [3Fe-4S]-type ferredoxin. Part of the multicomponent N,N-dimethyl phenylurea N-demethylase responsible for the initial N-demethylation step during the bacterial metabolism of N,N-dimethyl-substituted phenylurea herbicides. Catalyzes the mono-N-demethylation of N,N-dimethyl-substituted phenylurea herbicides to their mono-N-demethylated derivatives. Is active on isoproturon (IPU), chlorotoluron, metoxuron, monoron, diuron, fluometuron and fenuron, but cannot transform the N-methoxy-N-methyl-substituted herbicides. The sequence is that of N,N-dimethyl phenylurea N-demethylase subunit beta from Sphingobium sp. (strain YBL2).